A 116-amino-acid polypeptide reads, in one-letter code: Phosphoribosyl-AMP cyclohydrolase (116 aa).

Residue Asp85 coordinates Mg(2+). Cys86 is a Zn(2+) binding site. Mg(2+)-binding residues include Asp87 and Asp89. Zn(2+) is bound by residues Cys102 and Cys109.

This sequence belongs to the PRA-CH family. Homodimer. Requires Mg(2+) as cofactor. Zn(2+) serves as cofactor.

It is found in the cytoplasm. It catalyses the reaction 1-(5-phospho-beta-D-ribosyl)-5'-AMP + H2O = 1-(5-phospho-beta-D-ribosyl)-5-[(5-phospho-beta-D-ribosylamino)methylideneamino]imidazole-4-carboxamide. It participates in amino-acid biosynthesis; L-histidine biosynthesis; L-histidine from 5-phospho-alpha-D-ribose 1-diphosphate: step 3/9. Functionally, catalyzes the hydrolysis of the adenine ring of phosphoribosyl-AMP. This Thermobifida fusca (strain YX) protein is Phosphoribosyl-AMP cyclohydrolase.